Consider the following 206-residue polypeptide: A-type ATP synthase subunit D (206 aa).

The protein belongs to the V-ATPase D subunit family. As to quaternary structure, has multiple subunits with at least A(3), B(3), C, D, E, F, H, I and proteolipid K(x).

The protein localises to the cell membrane. In terms of biological role, component of the A-type ATP synthase that produces ATP from ADP in the presence of a proton gradient across the membrane. This is A-type ATP synthase subunit D from Methanococcoides burtonii (strain DSM 6242 / NBRC 107633 / OCM 468 / ACE-M).